A 91-amino-acid polypeptide reads, in one-letter code: Small ribosomal subunit protein uS19 (91 aa).

Belongs to the universal ribosomal protein uS19 family.

Protein S19 forms a complex with S13 that binds strongly to the 16S ribosomal RNA. This chain is Small ribosomal subunit protein uS19, found in Sphingopyxis alaskensis (strain DSM 13593 / LMG 18877 / RB2256) (Sphingomonas alaskensis).